The chain runs to 521 residues: MAETKKGSESYPIKTIVVLVQENRSFDHTLGWFKELNREIDGVMKSDQKFNPGFSSDLNSHNVVFGDQSQYVDPNPGHSIRDIYEQVFGKPWDSGHPDPNPGPATMSGFAQNAERKMKGMSSAVMNGFKPDALPVYKELVQNFAICDRWFASVPGATQPNRLFIHSATSHGTTNNERKLLIEGFPQKTIFESLDEAGFTFGIYYQCFPTTLFYRNLRKLKYLTRFHDYGLQFKKDCKEGNLPNYVVVEQRWYDLLLNPANDDHPSHDVSEGQKLVKEVYEALRSSPQWNEILFIITYDEHGGFYDHVPTPLDGVPNPDGILGPPPYNFEFNRLGVRVPTFFISPWIEPGTVLHGSNGPYLMSQYEHSSIPATVKKIFKLKDFLTKRDSWAGTFESVITRNSPRQDCPETLSNPVKMRGTVAKENAELSDFQEELVIVAAGLKGDYKNEELLYKLCKKTCVSDASKYVTKAFDKFVEESKKARERGGDENDIVFCVDDDDDHNVVKPPPSQSEPSHATPWSN.

The span at 478-487 (SKKARERGGD) shows a compositional bias: basic and acidic residues. A disordered region spans residues 478 to 521 (SKKARERGGDENDIVFCVDDDDDHNVVKPPPSQSEPSHATPWSN). Over residues 511–521 (SEPSHATPWSN) the composition is skewed to polar residues.

Belongs to the bacterial phospholipase C family. As to expression, specifically expressed in flowers.

Its subcellular location is the cytoplasm. It is found in the cytosol. It carries out the reaction a 1,2-diacyl-sn-glycero-3-phosphocholine + H2O = phosphocholine + a 1,2-diacyl-sn-glycerol + H(+). Non-specific phospholipase C (PLC) which assumes minor PLC activity during inorganic phosphate starvation. Can hydrolyze both phosphatidylcholine (PC) and phosphatidylethanolamine (PE). Required for normal accumulation of digalactosyldiacylglycerol (DGDG) during phosphate limitation and may contribute to the conversion of phospholipids to diacylglycerol, the substrate for galactolipid synthesis. This chain is Non-specific phospholipase C5 (NPC5), found in Arabidopsis thaliana (Mouse-ear cress).